A 64-amino-acid chain; its full sequence is Large ribosomal subunit protein uL29 (64 aa).

This sequence belongs to the universal ribosomal protein uL29 family.

This chain is Large ribosomal subunit protein uL29, found in Ligilactobacillus salivarius (strain UCC118) (Lactobacillus salivarius).